A 312-amino-acid polypeptide reads, in one-letter code: Olfactory receptor 2T8 (312 aa).

Topologically, residues 1 to 26 (MENGSYTSYFILLGLFNHTRAHQVLF) are extracellular. N-linked (GlcNAc...) asparagine glycosylation is found at asparagine 3 and asparagine 17. A helical membrane pass occupies residues 27-47 (MMVLSIVLTSLFGNSLMILLI). Over 48 to 55 (HWDHRLHT) the chain is Cytoplasmic. Residues 56-76 (PMYFLLSQLSLMDVMLVSTTV) traverse the membrane as a helical segment. Over 77-96 (PKMAADYLTGSKAISRAGCG) the chain is Extracellular. Cysteine 95 and cysteine 177 are disulfide-bonded. The helical transmembrane segment at 97–117 (AQIFFLPTLGGGECFLLAAMA) threads the bilayer. The Cytoplasmic segment spans residues 118-143 (YDRYAAVCHPLRYPTLMSWQLCLRMN). A helical membrane pass occupies residues 144 to 164 (LSCWLLGAADGLLQAVATLSF). At 165–201 (PYCGAHEIDHFFCETPVLVRLACADTSVFENAMYICC) the chain is on the extracellular side. A helical membrane pass occupies residues 202–222 (VLMLLVPFSLILSSYGLILAA). The Cytoplasmic segment spans residues 223-234 (VLHMRSTEARKK). The helical transmembrane segment at 235 to 255 (AFATCSSHVAVVGLFYGAAIF) threads the bilayer. Topologically, residues 256-269 (TYMRPKSHRSTNHD) are extracellular. Residues 270–290 (KVVSAFYTMFTPLLNPLIYSV) form a helical membrane-spanning segment. Topologically, residues 291-312 (KNSEVKGALTRCMGRCVALSRE) are cytoplasmic.

It belongs to the G-protein coupled receptor 1 family.

It is found in the cell membrane. Its function is as follows. Odorant receptor. The polypeptide is Olfactory receptor 2T8 (OR2T8) (Homo sapiens (Human)).